The following is an 864-amino-acid chain: Mitochondrial 15S rRNA processing factor CCM1 (864 aa).

The transit peptide at 1-76 (MYMARCGPKN…REFSNTLKER (76 aa)) directs the protein to the mitochondrion. 2 PPR repeats span residues 319-353 (NKQN…STKH) and 356-390 (DICT…NIKP).

It belongs to the CCM1 family. In terms of assembly, binds to mitochondrial small subunit 15S rRNA.

It localises to the mitochondrion. Regulates mitochondrial small subunit maturation by controlling 15S rRNA 5'-end processing. Localizes to the 5' precursor of the 15S rRNA in a position that is subsequently occupied by mS47 in the mature yeast mtSSU. Uses structure and sequence-specific RNA recognition, binding to a single-stranded region of the precursor and specifically recognizing bases -6 to -1. The exchange of Ccm1 for mS47 is coupled to the irreversible removal of precursor rRNA that is accompanied by conformational changes of the mitoribosomal proteins uS5m and mS26. These conformational changes signal completion of 5'-end rRNA processing through protection of the mature 5'-end of the 15S rRNA and stabilization of mS47. The removal of the 5' precursor together with the dissociation of Ccm1 may be catalyzed by the 5'-3' exoribonuclease Pet127. Involved in the specific removal of group I introns in mitochondrial encoded transcripts. This is Mitochondrial 15S rRNA processing factor CCM1 (CCM1) from Saccharomyces cerevisiae (strain JAY291) (Baker's yeast).